A 365-amino-acid chain; its full sequence is Phosphoserine aminotransferase (365 aa).

Arginine 42 lines the L-glutamate pocket. Pyridoxal 5'-phosphate is bound by residues 76-77 (GR), tryptophan 102, threonine 156, aspartate 175, and glutamine 198. Lysine 199 carries the post-translational modification N6-(pyridoxal phosphate)lysine. Residue 240–241 (NT) coordinates pyridoxal 5'-phosphate.

Belongs to the class-V pyridoxal-phosphate-dependent aminotransferase family. SerC subfamily. As to quaternary structure, homodimer. It depends on pyridoxal 5'-phosphate as a cofactor.

It is found in the cytoplasm. It catalyses the reaction O-phospho-L-serine + 2-oxoglutarate = 3-phosphooxypyruvate + L-glutamate. The catalysed reaction is 4-(phosphooxy)-L-threonine + 2-oxoglutarate = (R)-3-hydroxy-2-oxo-4-phosphooxybutanoate + L-glutamate. Its pathway is amino-acid biosynthesis; L-serine biosynthesis; L-serine from 3-phospho-D-glycerate: step 2/3. It functions in the pathway cofactor biosynthesis; pyridoxine 5'-phosphate biosynthesis; pyridoxine 5'-phosphate from D-erythrose 4-phosphate: step 3/5. Catalyzes the reversible conversion of 3-phosphohydroxypyruvate to phosphoserine and of 3-hydroxy-2-oxo-4-phosphonooxybutanoate to phosphohydroxythreonine. In Shewanella oneidensis (strain ATCC 700550 / JCM 31522 / CIP 106686 / LMG 19005 / NCIMB 14063 / MR-1), this protein is Phosphoserine aminotransferase.